The following is a 77-amino-acid chain: UPF0291 protein EAT1b_0405 (77 aa).

Residues 53–77 (KVVDPDGNDVTPEKLKEDQKRYRGE) are disordered. Positions 63–77 (TPEKLKEDQKRYRGE) are enriched in basic and acidic residues.

The protein belongs to the UPF0291 family.

The protein localises to the cytoplasm. The chain is UPF0291 protein EAT1b_0405 from Exiguobacterium sp. (strain ATCC BAA-1283 / AT1b).